A 271-amino-acid chain; its full sequence is GATA transcription factor 19 (271 aa).

Residues 1-23 (MAAEPPADGRDPPADDGAAGDGA) are disordered. The 36-residue stretch at 33-68 (LSAASEQLTLVYQGEVYVFDPVPPQKVQAVLLVLGG) folds into the Tify domain. One can recognise a CCT domain in the interval 95–137 (RVASLMRFREKRKERCFDKKIRYSVRKEVAQKMKRRKGQFAGR). The segment at 166-193 (CQNCGISSRLTPAMRRGPAGPRSLCNAC) adopts a GATA-type zinc-finger fold. Positions 238–271 (NQTTMKTDTEMVPEQEQKADVLPPTKEEDSMATS) are disordered. Basic and acidic residues predominate over residues 252-271 (QEQKADVLPPTKEEDSMATS).

The protein belongs to the type IV zinc-finger family. Class C subfamily.

It localises to the nucleus. Functionally, transcriptional activator that specifically binds 5'-GATA-3' or 5'-GAT-3' motifs within gene promoters. The sequence is that of GATA transcription factor 19 from Oryza sativa subsp. japonica (Rice).